The chain runs to 846 residues: Aminopeptidase N (846 aa).

Substrate-binding positions include Glu-120 and 252 to 256; that span reads GAMEN. His-288 contributes to the Zn(2+) binding site. The active-site Proton acceptor is Glu-289. Positions 292 and 311 each coordinate Zn(2+).

The protein belongs to the peptidase M1 family. Monomer. Zn(2+) serves as cofactor.

The protein localises to the cytoplasm. The enzyme catalyses Release of an N-terminal amino acid, Xaa-|-Yaa- from a peptide, amide or arylamide. Xaa is preferably Ala, but may be most amino acids including Pro (slow action). When a terminal hydrophobic residue is followed by a prolyl residue, the two may be released as an intact Xaa-Pro dipeptide.. Aminopeptidase with broad substrate specificity to several peptides. It has more affinity for oligopeptides than for dipeptides. It plays an essential role in the metabolism, it may be involved in nitrogen supply or protein turnover. The chain is Aminopeptidase N (pepN) from Lactococcus lactis subsp. lactis (strain IL1403) (Streptococcus lactis).